A 552-amino-acid polypeptide reads, in one-letter code: Membrane protein insertase YidC (552 aa).

The chain crosses the membrane as a helical span at residues 6 to 26; sequence NLLLAAIAAVILMLFIRWNHF. 2 stretches are compositionally biased toward polar residues: residues 32–41 and 60–70; these read QHQAGNTPAG and PTASDTPQATA. A disordered region spans residues 32 to 70; it reads QHQAGNTPAGSSIAAIAPDSNGDIPSAVPTASDTPQATA. The next 4 membrane-spanning stretches (helical) occupy residues 365 to 387, 431 to 451, 472 to 492, and 508 to 528; these read WGLA…SAAS, FGGC…YWVL, MDPY…MQKL, and LPFV…LYWV.

It belongs to the OXA1/ALB3/YidC family. Type 1 subfamily. In terms of assembly, interacts with the Sec translocase complex via SecD. Specifically interacts with transmembrane segments of nascent integral membrane proteins during membrane integration.

The protein resides in the cell inner membrane. Functionally, required for the insertion and/or proper folding and/or complex formation of integral membrane proteins into the membrane. Involved in integration of membrane proteins that insert both dependently and independently of the Sec translocase complex, as well as at least some lipoproteins. Aids folding of multispanning membrane proteins. The chain is Membrane protein insertase YidC from Cellvibrio japonicus (strain Ueda107) (Pseudomonas fluorescens subsp. cellulosa).